The primary structure comprises 344 residues: L-rhamnose-proton symporter (344 aa).

10 helical membrane-spanning segments follow: residues Ala-4 to Ala-24, Trp-38 to Leu-58, Phe-68 to Ile-88, Met-101 to Ile-121, Thr-137 to Leu-157, Leu-175 to Ala-195, Leu-214 to Ile-234, Val-259 to Gly-279, Ile-290 to Leu-310, and Val-323 to Ala-343.

Belongs to the L-rhamnose transporter (TC 2.A.7.6) family.

The protein resides in the cell inner membrane. It catalyses the reaction L-rhamnopyranose(in) + H(+)(in) = L-rhamnopyranose(out) + H(+)(out). Uptake of L-rhamnose across the cytoplasmic membrane with the concomitant transport of protons into the cell (symport system). The chain is L-rhamnose-proton symporter from Escherichia coli O1:K1 / APEC.